A 126-amino-acid polypeptide reads, in one-letter code: Protein ApaG (126 aa).

Residues 2–126 (SQVESPIKIK…FRLAVPGIFQ (125 aa)) form the ApaG domain.

In Shewanella frigidimarina (strain NCIMB 400), this protein is Protein ApaG.